Here is a 100-residue protein sequence, read N- to C-terminus: Aspartyl/glutamyl-tRNA(Asn/Gln) amidotransferase subunit C (100 aa).

It belongs to the GatC family. In terms of assembly, heterotrimer of A, B and C subunits.

The catalysed reaction is L-glutamyl-tRNA(Gln) + L-glutamine + ATP + H2O = L-glutaminyl-tRNA(Gln) + L-glutamate + ADP + phosphate + H(+). It catalyses the reaction L-aspartyl-tRNA(Asn) + L-glutamine + ATP + H2O = L-asparaginyl-tRNA(Asn) + L-glutamate + ADP + phosphate + 2 H(+). Allows the formation of correctly charged Asn-tRNA(Asn) or Gln-tRNA(Gln) through the transamidation of misacylated Asp-tRNA(Asn) or Glu-tRNA(Gln) in organisms which lack either or both of asparaginyl-tRNA or glutaminyl-tRNA synthetases. The reaction takes place in the presence of glutamine and ATP through an activated phospho-Asp-tRNA(Asn) or phospho-Glu-tRNA(Gln). The protein is Aspartyl/glutamyl-tRNA(Asn/Gln) amidotransferase subunit C of Staphylococcus haemolyticus (strain JCSC1435).